The chain runs to 284 residues: RNase adapter protein RapZ (284 aa).

8–15 (GRSGSGKS) lines the ATP pocket. 56–59 (DVRN) contributes to the GTP binding site. The segment at 266–284 (RSRGKNAQSRHRTLEKSKS) is RNA-binding.

It belongs to the RapZ-like family. RapZ subfamily. In terms of assembly, homotrimer.

Functionally, modulates the synthesis of GlmS, by affecting the processing and stability of the regulatory small RNA GlmZ. When glucosamine-6-phosphate (GlcN6P) concentrations are high in the cell, RapZ binds GlmZ and targets it to cleavage by RNase E. Consequently, GlmZ is inactivated and unable to activate GlmS synthesis. Under low GlcN6P concentrations, RapZ is sequestered and inactivated by an other regulatory small RNA, GlmY, preventing GlmZ degradation and leading to synthesis of GlmS. This is RNase adapter protein RapZ from Sodalis glossinidius (strain morsitans).